The sequence spans 328 residues: RING finger protein 175 (328 aa).

Helical transmembrane passes span 51–71, 83–103, 104–121, 149–169, and 180–200; these read MHVEMILIFLCVLVIAQIVLV, LVTLLQMWVVPLYFTIKLYWW, RFLSMWGMFSVITSYILF, AFGVVGYLAIMFTMCGFNLFF, and GIVSLFYGLYYGVMGRDFAEI. Residues 227 to 277 form an RING-type; atypical zinc finger; it reads CAVCGQKIIVELDEEGLIENTYQLSCNHVFHEFCIRGWCIVGKKQTCPYCK.

It localises to the membrane. The polypeptide is RING finger protein 175 (RNF175) (Homo sapiens (Human)).